A 257-amino-acid chain; its full sequence is Putative hydro-lyase Bamb_5282 (257 aa).

It belongs to the D-glutamate cyclase family.

The chain is Putative hydro-lyase Bamb_5282 from Burkholderia ambifaria (strain ATCC BAA-244 / DSM 16087 / CCUG 44356 / LMG 19182 / AMMD) (Burkholderia cepacia (strain AMMD)).